We begin with the raw amino-acid sequence, 502 residues long: Cytochrome P450 monooxygenase orf6 (502 aa).

Residues Ala-3–Leu-25 traverse the membrane as a helical segment. The N-linked (GlcNAc...) asparagine glycan is linked to Asn-382. Cys-445 is a heme binding site.

It belongs to the cytochrome P450 family. Heme is required as a cofactor.

Its subcellular location is the membrane. Its pathway is mycotoxin biosynthesis. In terms of biological role, cytochrome P450 monooxygenase; part of the gene cluster that mediates the biosynthesis of brefeldin A (BFA), a protein transport inhibitor that shows antiviral, antifungal, and antitumor properties. The proposed biosynthesis of BFA involves formation of an acyclic polyketide chain that is differentially tailored throughout the backbone. The highly reducing polyketide synthase Bref-PKS is proposed to synthesize the precisely reduced octaketide precursor, which could then be directly offloaded by the thiohydrolase enzyme Bref-TH followed by a cytochrome P450 monooxygenase-mediated formation of the cyclopentane ring and macrocyclization to afford 7-deoxy BFA. Alternatively, the first ring annulation can also occur on the ACP-tethered intermediate before the thiohydrolase release and lactonization. The C7-hydroxylation by another cytochrome P450 monooxygenase is believed to be the final step in the process to obtain the final structure of BFA. In addition to the HRPKS Bref-PKS and the thiohydrolase Bref-TH, the brefeldin A biosynthesis cluster contains 4 cytochrome p450 monooxygenases (called orf3 to orf6), as well a the probable cluster-specific transcription regulator orf8. In Eupenicillium brefeldianum (Penicillium brefeldianum), this protein is Cytochrome P450 monooxygenase orf6.